The primary structure comprises 95 residues: Small ubiquitin-related modifier 4 (95 aa).

In terms of domain architecture, Ubiquitin-like spans H17 to Y95. G93 is covalently cross-linked (Glycyl lysine isopeptide (Gly-Lys) (interchain with K-? in acceptor proteins)). Residues V94–Y95 constitute a propeptide that is removed on maturation.

The protein belongs to the ubiquitin family. SUMO subfamily. In terms of assembly, interacts with SAE2. Covalently attached to a number of proteins. Post-translationally, in contrast to SUMO1, SUMO2 and SUMO3, seems to be insensitive to sentrin-specific proteases due to the presence of Pro-90. This may impair processing to mature form and conjugation to substrates. As to expression, expressed mainly in adult and embryonic kidney. Expressed at various levels in immune tissues, with the highest expression in the lymph node and spleen.

Its function is as follows. Ubiquitin-like protein which can be covalently attached to target lysines as a monomer. Does not seem to be involved in protein degradation and may modulate protein subcellular localization, stability or activity. Upon oxidative stress, conjugates to various anti-oxidant enzymes, chaperones, and stress defense proteins. May also conjugate to NFKBIA, TFAP2A and FOS, negatively regulating their transcriptional activity, and to NR3C1, positively regulating its transcriptional activity. Covalent attachment to its substrates requires prior activation by the E1 complex SAE1-SAE2 and linkage to the E2 enzyme UBE2I. The protein is Small ubiquitin-related modifier 4 (SUMO4) of Homo sapiens (Human).